Consider the following 166-residue polypeptide: MFPMVTEFMNYGQQTIRAARYIGQGFMITLSHANRLPVTIQYPYEKLITSERFRGRIHFEFDKCIACEVCVRVCPIDLPVVDWKLETDIRKKRLLNYSIDFGICIFCGNCVEYCPTNCLSMTEEYELSTYDRHELNYNQIALGRLPMSIIDDYTIRTIFNLPEIKP.

2 4Fe-4S ferredoxin-type domains span residues 55–84 (GRIH…VDWK) and 95–124 (LNYS…MTEE). [4Fe-4S] cluster is bound by residues Cys-64, Cys-67, Cys-70, Cys-74, Cys-104, Cys-107, Cys-110, and Cys-114.

The protein belongs to the complex I 23 kDa subunit family. In terms of assembly, NDH is composed of at least 16 different subunits, 5 of which are encoded in the nucleus. It depends on [4Fe-4S] cluster as a cofactor.

The protein localises to the plastid. It localises to the chloroplast thylakoid membrane. The enzyme catalyses a plastoquinone + NADH + (n+1) H(+)(in) = a plastoquinol + NAD(+) + n H(+)(out). It carries out the reaction a plastoquinone + NADPH + (n+1) H(+)(in) = a plastoquinol + NADP(+) + n H(+)(out). NDH shuttles electrons from NAD(P)H:plastoquinone, via FMN and iron-sulfur (Fe-S) centers, to quinones in the photosynthetic chain and possibly in a chloroplast respiratory chain. The immediate electron acceptor for the enzyme in this species is believed to be plastoquinone. Couples the redox reaction to proton translocation, and thus conserves the redox energy in a proton gradient. The sequence is that of NAD(P)H-quinone oxidoreductase subunit I, chloroplastic from Rensonia salvadorica.